Here is a 104-residue protein sequence, read N- to C-terminus: Vacuolar ATPase assembly integral membrane protein VMA21 (104 aa).

Over 1–21 (MSNRVSTGKMAMAPQESVQPA) the chain is Cytoplasmic. Residues 22–42 (VLYKLVLFALLMAVVPIGTYF) traverse the membrane as a helical segment. Residues 43–65 (STLNYLWDGASRCGFPSGLCSTT) lie on the Lumenal side of the membrane. Residues 66-86 (FAAISAIAAANLILVGYVVVA) traverse the membrane as a helical segment. The Cytoplasmic segment spans residues 87–104 (FREDAASRTGPLPEKKTS). Positions 101-104 (KKTS) match the Prevents secretion from ER motif.

This sequence belongs to the VMA21 family.

The protein localises to the endoplasmic reticulum membrane. The protein resides in the endoplasmic reticulum-Golgi intermediate compartment membrane. Its subcellular location is the cytoplasmic vesicle. It localises to the COPII-coated vesicle membrane. Its function is as follows. Required for the assembly of the V0 complex of the vacuolar ATPase (V-ATPase) in the endoplasmic reticulum. The protein is Vacuolar ATPase assembly integral membrane protein VMA21 of Cryptococcus neoformans var. neoformans serotype D (strain B-3501A) (Filobasidiella neoformans).